Reading from the N-terminus, the 89-residue chain is Phosphocarrier protein HPr (89 aa).

The 88-residue stretch at 1–88 (MLEHELTVTN…ELFENRFNED (88 aa)) folds into the HPr domain. H15 (pros-phosphohistidine intermediate) is an active-site residue. S46 is modified (phosphoserine; by HPrK/P).

This sequence belongs to the HPr family.

Its subcellular location is the cytoplasm. Its activity is regulated as follows. Phosphorylation on Ser-46 inhibits the phosphoryl transfer from enzyme I to HPr. In terms of biological role, general (non sugar-specific) component of the phosphoenolpyruvate-dependent sugar phosphotransferase system (sugar PTS). This major carbohydrate active-transport system catalyzes the phosphorylation of incoming sugar substrates concomitantly with their translocation across the cell membrane. The phosphoryl group from phosphoenolpyruvate (PEP) is transferred to the phosphoryl carrier protein HPr by enzyme I. Phospho-HPr then transfers it to the PTS EIIA domain. In Xylella fastidiosa (strain Temecula1 / ATCC 700964), this protein is Phosphocarrier protein HPr (ptsH).